A 169-amino-acid polypeptide reads, in one-letter code: Endoribonuclease YbeY (169 aa).

3 residues coordinate Zn(2+): His-128, His-132, and His-138.

It belongs to the endoribonuclease YbeY family. The cofactor is Zn(2+).

Its subcellular location is the cytoplasm. Its function is as follows. Single strand-specific metallo-endoribonuclease involved in late-stage 70S ribosome quality control and in maturation of the 3' terminus of the 16S rRNA. In Cyanothece sp. (strain PCC 7425 / ATCC 29141), this protein is Endoribonuclease YbeY.